The following is a 447-amino-acid chain: N-succinylarginine dihydrolase (447 aa).

Substrate is bound by residues 19 to 28 (AGLSFGNEAS), N110, and 137 to 138 (HR). Residue E174 is part of the active site. Residue R212 coordinates substrate. The active site involves H248. D250 and N359 together coordinate substrate. The active-site Nucleophile is C365.

This sequence belongs to the succinylarginine dihydrolase family. In terms of assembly, homodimer.

It carries out the reaction N(2)-succinyl-L-arginine + 2 H2O + 2 H(+) = N(2)-succinyl-L-ornithine + 2 NH4(+) + CO2. It participates in amino-acid degradation; L-arginine degradation via AST pathway; L-glutamate and succinate from L-arginine: step 2/5. Its function is as follows. Catalyzes the hydrolysis of N(2)-succinylarginine into N(2)-succinylornithine, ammonia and CO(2). The protein is N-succinylarginine dihydrolase of Salmonella enteritidis PT4 (strain P125109).